We begin with the raw amino-acid sequence, 181 residues long: MQFTILNEPSLDSQRREGDLASENYVFGDIRKEGVRILEDSLRSERNALLAIGAGGAADRVKQHYRKLLDDWEAAIMEIRSNDKYESLCCGFAIEKAEVETEMRNTEELDVYKECLVSECFDKKKRRHIPESSKELLEKAFKVKRFPNSKERERIARECGISPLQVRVWFTNKRARSKSRA.

The homeobox DNA-binding region spans 122–181; that stretch reads DKKKRRHIPESSKELLEKAFKVKRFPNSKERERIARECGISPLQVRVWFTNKRARSKSRA.

Belongs to the MATA1 family.

Its subcellular location is the nucleus. Its function is as follows. Mating type proteins are sequence specific DNA-binding proteins that act as master switches in yeast differentiation by controlling gene expression in a cell type-specific fashion. The protein is Mating-type protein A1 (MATA1) of Pichia angusta (Yeast).